Reading from the N-terminus, the 62-residue chain is Large ribosomal subunit protein bL28 (62 aa).

It belongs to the bacterial ribosomal protein bL28 family.

This chain is Large ribosomal subunit protein bL28, found in Staphylococcus haemolyticus (strain JCSC1435).